The sequence spans 66 residues: Large ribosomal subunit protein bL28 (66 aa).

This sequence belongs to the bacterial ribosomal protein bL28 family.

This chain is Large ribosomal subunit protein bL28, found in Oenococcus oeni (strain ATCC BAA-331 / PSU-1).